We begin with the raw amino-acid sequence, 981 residues long: Amidohydrolase tasK (981 aa).

The segment at 1–36 is disordered; sequence MDDQKGPLPPYTPTATAPPPASMRQRRPPGRRRALR. Residues 7–21 are compositionally biased toward pro residues; sequence PLPPYTPTATAPPPA. The segment covering 24–36 has biased composition (basic residues); that stretch reads RQRRPPGRRRALR. A helical transmembrane segment spans residues 40–57; sequence TVRVLALACLAFVVLAQW. The interval 86–107 is disordered; sequence LRVRPQDPAGPGRSKNDRYLDG. Residues histidine 187 and histidine 189 each contribute to the Fe(2+) site. Zn(2+)-binding residues include histidine 187 and histidine 189. N-linked (GlcNAc...) asparagine glycosylation is present at asparagine 407. Positions 819–838 are disordered; it reads KKQQKQQQQQQQQQQQQHGT. A compositionally biased stretch (low complexity) spans 823–835; sequence KQQQQQQQQQQQQ. The N-linked (GlcNAc...) asparagine glycan is linked to asparagine 891.

This sequence belongs to the metallo-dependent hydrolases superfamily. It depends on Fe(2+) as a cofactor. Mn(2+) is required as a cofactor. The cofactor is Zn(2+).

The protein resides in the membrane. Functionally, amidohydrolase; part of the gene cluster that mediates the biosynthesis of the tetramic acids Sch210971 and Sch210972, potential anti-HIV fungal natural product that contain a decalin core. The PKS module of tasS together with the enoylreductase tasC catalyze the formation of the polyketide unit which is then conjugated to 4-hydroxyl-4-methyl glutamate (HMG) by the condensation domain of the tasS NRPS module. One unique structural feature of Sch210971 and Sch210972 is the tetramic acid motif proposed to be derived from the non-proteinogenic amino acid HMG, by a Dieckmann-type condensation catalyzed by the reductase domain of tasS. The aldolase tasA catalyzes the aldol condensation of 2 molecules of pyruvic acid to yield the intermediate 4-hydroxyl-4-methyl-2-oxoglutarate (HMOG), which can then be stereoselectively transaminated, may be by tasG, to form HMG. The Diels-Alderase tas3 then uses the Dieckmann product of tasS as substrate and catalyzes the Diels-Alder cycloaddition to form the decalin ring of Sch210971 and Sch210972. The chain is Amidohydrolase tasK from Hapsidospora irregularis.